Here is a 56-residue protein sequence, read N- to C-terminus: UPF0391 membrane protein Noc_0484 (56 aa).

Transmembrane regions (helical) follow at residues 6-26 (VTFL…IAGI) and 29-49 (EIAW…LVLG).

It belongs to the UPF0391 family.

The protein localises to the cell membrane. The sequence is that of UPF0391 membrane protein Noc_0484 from Nitrosococcus oceani (strain ATCC 19707 / BCRC 17464 / JCM 30415 / NCIMB 11848 / C-107).